Reading from the N-terminus, the 525-residue chain is Peptide chain release factor 3 (525 aa).

One can recognise a tr-type G domain in the interval 9 to 276 (AKRRTFAIIS…GFTRYAPAPQ (268 aa)). GTP is bound by residues 18-25 (SHPDAGKT), 86-90 (DTPGH), and 140-143 (NKFD).

Belongs to the TRAFAC class translation factor GTPase superfamily. Classic translation factor GTPase family. PrfC subfamily.

The protein resides in the cytoplasm. Functionally, increases the formation of ribosomal termination complexes and stimulates activities of RF-1 and RF-2. It binds guanine nucleotides and has strong preference for UGA stop codons. It may interact directly with the ribosome. The stimulation of RF-1 and RF-2 is significantly reduced by GTP and GDP, but not by GMP. This chain is Peptide chain release factor 3, found in Francisella tularensis subsp. tularensis (strain WY96-3418).